The sequence spans 1501 residues: Pleiotropic ABC efflux transporter of multiple drugs CDR1 (1501 aa).

The tract at residues 1 to 30 is disordered; it reads MSDSKMSSQDESKLEKAISQDSSSENHSIN. Residues 1–513 are Cytoplasmic-facing; that stretch reads MSDSKMSSQD…NFLRMKGDPS (513 aa). An NBD1 region spans residues 2-512; sequence SDSKMSSQDE…RNFLRMKGDP (511 aa). Basic and acidic residues predominate over residues 8–18; the sequence is SQDESKLEKAI. In terms of domain architecture, ABC transporter 1 spans 150–404; that stretch reads LATEGFRHFQ…FEKMGWKCPQ (255 aa). A helical membrane pass occupies residues 514 to 534; that stretch reads IPIFSVFGQLVMGLILSSVFY. Residues 535 to 548 are Extracellular-facing; that stretch reads NLSQTTGSFYYRGA. A helical membrane pass occupies residues 549–569; that stretch reads AMFFAVLFNAFSSLLEIMSLF. Residues 570 to 597 are Cytoplasmic-facing; sequence EARPIVEKHKKYALYRPSADALASIISE. A helical membrane pass occupies residues 598 to 618; that stretch reads LPVKLAMSMSFNFVFYFMVNF. Topologically, residues 619–622 are extracellular; the sequence is RRNP. The helical transmembrane segment at 623 to 643 threads the bilayer; it reads GRFFFYWLMCIWCTFVMSHLF. The Cytoplasmic portion of the chain corresponds to 644–654; sequence RSIGAVSTSIS. Residues 655 to 675 traverse the membrane as a helical segment; it reads GAMTPATVLLLAMVIYTGFVI. Residues 676 to 764 are Extracellular-facing; the sequence is PTPSMLGWSR…QYYNSHKWRN (89 aa). A helical transmembrane segment spans residues 765-785; sequence LGITIGFAVFFLAIYIALTEF. Residues 786 to 1195 lie on the Cytoplasmic side of the membrane; that stretch reads NKGAMQKGEI…TIVQDWRSPG (410 aa). The tract at residues 786–1195 is NBD2; sequence NKGAMQKGEI…TIVQDWRSPG (410 aa). One can recognise an ABC transporter 2 domain in the interval 859–1103; it reads FFWRDLTYQV…MINYFEKYGA (245 aa). Residue 895–902 coordinates ATP; it reads GASGAGKT. Positions 1137 to 1164 form a coiled coil; it reads RNSSEYQAVREEINRMEAELSKLPRDND. A helical transmembrane segment spans residues 1196–1216; the sequence is YIYSKIFLVVSAALFNGFSFF. Over 1217-1229 the chain is Extracellular; sequence KAKNNMQGLQNQM. The helical transmembrane segment at 1230–1250 threads the bilayer; that stretch reads FSVFMFFIPFNTLVQQMLPYF. Topologically, residues 1251–1280 are cytoplasmic; that stretch reads VKQRDVYEVREAPSRTFSWFAFIAGQITSE. Residues 1281-1301 traverse the membrane as a helical segment; sequence IPYQVAVGTIAFFCWYYPLGL. At 1302–1314 the chain is on the extracellular side; that stretch reads YNNATPTDSVNPR. Residues 1315–1335 form a helical membrane-spanning segment; it reads GVLMWMLVTAFYVYTATMGQL. Residues 1336–1355 lie on the Cytoplasmic side of the membrane; it reads CMSFSELADNAANLATLLFT. The helical transmembrane segment at 1356-1376 threads the bilayer; sequence MCLNFCGVLAGPDVLPGFWIF. Topologically, residues 1377–1466 are extracellular; that stretch reads MYRCNPFTYL…NSLYSERWRN (90 aa). Residues 1467-1487 traverse the membrane as a helical segment; sequence FGIFIAFIAINIILTVIFYWL. Over 1488–1501 the chain is Cytoplasmic; that stretch reads ARVPKGNREKKNKK.

It belongs to the ABC transporter superfamily.

Its subcellular location is the cell membrane. Disulfiram reverses CDR1-mediated drug resistance by interaction with both ATP and substrate-binding sites of the transporter and may be useful for antifungal therapy. Functionally, pleiotropic ABC efflux transporter that confers resistance to numerous chemicals including anisomycin, cycloheximide, fluconazole, miconazole, ketoconazole, itriconazole, nystatin, terbinafine, amorolfine, brefeldin A, amphotericin B, fluphenazine, as well as estrogen. Plays a role in farnesol-induced apoptotic process through glutathione efflux activity. Mediates in-to-out translocation of membrane phospholipids including aminophospholipids and thus regulates asymmetric distribution of phosphatidylethanolamine. Exhibits nucleoside triphosphatase activity. This is Pleiotropic ABC efflux transporter of multiple drugs CDR1 (CDR1) from Candida albicans (strain SC5314 / ATCC MYA-2876) (Yeast).